The chain runs to 243 residues: 2-C-methyl-D-erythritol 4-phosphate cytidylyltransferase (243 aa).

The protein belongs to the IspD/TarI cytidylyltransferase family. IspD subfamily.

The enzyme catalyses 2-C-methyl-D-erythritol 4-phosphate + CTP + H(+) = 4-CDP-2-C-methyl-D-erythritol + diphosphate. It participates in isoprenoid biosynthesis; isopentenyl diphosphate biosynthesis via DXP pathway; isopentenyl diphosphate from 1-deoxy-D-xylulose 5-phosphate: step 2/6. Its function is as follows. Catalyzes the formation of 4-diphosphocytidyl-2-C-methyl-D-erythritol from CTP and 2-C-methyl-D-erythritol 4-phosphate (MEP). The protein is 2-C-methyl-D-erythritol 4-phosphate cytidylyltransferase of Aeromonas hydrophila subsp. hydrophila (strain ATCC 7966 / DSM 30187 / BCRC 13018 / CCUG 14551 / JCM 1027 / KCTC 2358 / NCIMB 9240 / NCTC 8049).